Here is a 310-residue protein sequence, read N- to C-terminus: Olfactory receptor 2A4 (310 aa).

At 1 to 24 (MGDNITSIREFLLLGFPVGPRIQM) the chain is on the extracellular side. An N-linked (GlcNAc...) asparagine glycan is attached at N4. The chain crosses the membrane as a helical span at residues 25 to 48 (LLFGLFSLFYVFTLLGNGTILGLI). Topologically, residues 49-56 (SLDSRLHA) are cytoplasmic. Residues 57–78 (PMYFFLSHLAVVDIAYACNTVP) traverse the membrane as a helical segment. Topologically, residues 79–99 (RMLVNLLHPAKPISFAGRMMQ) are extracellular. The chain crosses the membrane as a helical span at residues 100 to 119 (TFLFSTFAVTECLLLVVMSY). Residues 120 to 138 (DLYVAICHPLRYLAIMTWR) lie on the Cytoplasmic side of the membrane. Residues 139-157 (VCITLAVTSWTTGVLLSLI) traverse the membrane as a helical segment. Residues 158-194 (HLVLLLPLPFCRPQKIYHFFCEILAVLKLACADTHIN) are Extracellular-facing. A helical transmembrane segment spans residues 195–218 (ENMVLAGAISGLVGPLSTIVVSYM). Residues 219–235 (CILCAILQIQSREVQRK) lie on the Cytoplasmic side of the membrane. The chain crosses the membrane as a helical span at residues 236 to 258 (AFRTCFSHLCVIGLVYGTAIIMY). At 259–271 (VGPRYGNPKEQKK) the chain is on the extracellular side. The chain crosses the membrane as a helical span at residues 272-291 (YLLLFHSLFNPMLNPLICSL). Over 292 to 310 (RNSEVKNTLKRVLGVERAL) the chain is Cytoplasmic.

It belongs to the G-protein coupled receptor 1 family.

The protein resides in the cell membrane. In terms of biological role, odorant receptor. The chain is Olfactory receptor 2A4 (OR2A4) from Homo sapiens (Human).